Consider the following 374-residue polypeptide: Tetraacyldisaccharide 4'-kinase (374 aa).

66–73 (TAGGTGKT) lines the ATP pocket.

It belongs to the LpxK family.

It carries out the reaction a lipid A disaccharide + ATP = a lipid IVA + ADP + H(+). The protein operates within glycolipid biosynthesis; lipid IV(A) biosynthesis; lipid IV(A) from (3R)-3-hydroxytetradecanoyl-[acyl-carrier-protein] and UDP-N-acetyl-alpha-D-glucosamine: step 6/6. Its function is as follows. Transfers the gamma-phosphate of ATP to the 4'-position of a tetraacyldisaccharide 1-phosphate intermediate (termed DS-1-P) to form tetraacyldisaccharide 1,4'-bis-phosphate (lipid IVA). The sequence is that of Tetraacyldisaccharide 4'-kinase from Syntrophus aciditrophicus (strain SB).